Reading from the N-terminus, the 519-residue chain is Tetratricopeptide repeat protein 31 (519 aa).

Positions 147–197 (QKLLVTEEEANRLAEELVAEEERMKQKAEKKRLKKKRQKERKRQERLEQYC) form a coiled coil. Residues 175–187 (EKKRLKKKRQKER) are compositionally biased toward basic residues. 2 disordered regions span residues 175–230 (EKKR…EEDS) and 253–294 (RREK…VQAS). Position 278 is a phosphoserine (S278). TPR repeat units lie at residues 305–338 (SQEL…NPQD), 339–372 (HRLF…RPGW), and 373–406 (PRGL…GSQP). The interval 474–506 (PSCHRSHPNQPLSQTQSRRPHPLKPQDPSKGWD) is disordered. A compositionally biased stretch (polar residues) spans 481-490 (PNQPLSQTQS).

This chain is Tetratricopeptide repeat protein 31 (TTC31), found in Homo sapiens (Human).